A 256-amino-acid polypeptide reads, in one-letter code: 1-(5-phosphoribosyl)-5-[(5-phosphoribosylamino)methylideneamino] imidazole-4-carboxamide isomerase (256 aa).

Aspartate 8 functions as the Proton acceptor in the catalytic mechanism. Residue aspartate 129 is the Proton donor of the active site.

Belongs to the HisA/HisF family.

Its subcellular location is the cytoplasm. It carries out the reaction 1-(5-phospho-beta-D-ribosyl)-5-[(5-phospho-beta-D-ribosylamino)methylideneamino]imidazole-4-carboxamide = 5-[(5-phospho-1-deoxy-D-ribulos-1-ylimino)methylamino]-1-(5-phospho-beta-D-ribosyl)imidazole-4-carboxamide. It participates in amino-acid biosynthesis; L-histidine biosynthesis; L-histidine from 5-phospho-alpha-D-ribose 1-diphosphate: step 4/9. In Syntrophobacter fumaroxidans (strain DSM 10017 / MPOB), this protein is 1-(5-phosphoribosyl)-5-[(5-phosphoribosylamino)methylideneamino] imidazole-4-carboxamide isomerase.